Here is a 209-residue protein sequence, read N- to C-terminus: Hyperpolarization-activated voltage-gated potassium channel (209 aa).

Residues 1 to 10 are Cytoplasmic-facing; sequence MNLKDRRLKK. The chain crosses the membrane as a helical span at residues 11–31; it reads IMEVLSLIFTFEIVASFILST. Over 32–38 the chain is Extracellular; the sequence is YNPPYQD. The helical transmembrane segment at 39 to 59 threads the bilayer; that stretch reads LLIKLDYISIMFFTFEFIYNF. Residues 60-71 are Cytoplasmic-facing; sequence YYVEDKAKFFKD. The helical transmembrane segment at 72–92 threads the bilayer; that stretch reads IYNIVDAIVVIAFLLYSLQVF. Residues 93 to 96 are Extracellular-facing; sequence YSKA. The helical; Voltage-sensor transmembrane segment at 97 to 117 threads the bilayer; the sequence is FLGLRVINLLRILVLLRIIKL. Residues 118-125 are Cytoplasmic-facing; that stretch reads RKLEENQA. Residues 126–146 form a helical membrane-spanning segment; that stretch reads LINFLTLLTICFIASCLIWIV. At 147-181 the chain is on the extracellular side; it reads ESGVNPAINNFFDAFYFTTISITTVGYGDITPKTD. Residues 170 to 175 carry the Selectivity filter motif; that stretch reads TVGYGD. A helical membrane pass occupies residues 182 to 202; sequence AGKLIIIFSVLFFISGLITSL. Topologically, residues 203–209 are cytoplasmic; it reads QKALKGD.

The protein belongs to the potassium channel family. As to quaternary structure, homotetramer.

It localises to the cell membrane. Voltage-gated potassium-selective channel opened by hyperpolarization. The polypeptide is Hyperpolarization-activated voltage-gated potassium channel (mvp) (Methanocaldococcus jannaschii (strain ATCC 43067 / DSM 2661 / JAL-1 / JCM 10045 / NBRC 100440) (Methanococcus jannaschii)).